Consider the following 177-residue polypeptide: Probable chemoreceptor glutamine deamidase CheD (177 aa).

It belongs to the CheD family.

It carries out the reaction L-glutaminyl-[protein] + H2O = L-glutamyl-[protein] + NH4(+). Its function is as follows. Probably deamidates glutamine residues to glutamate on methyl-accepting chemotaxis receptors (MCPs), playing an important role in chemotaxis. This Pseudomonas savastanoi pv. phaseolicola (strain 1448A / Race 6) (Pseudomonas syringae pv. phaseolicola (strain 1448A / Race 6)) protein is Probable chemoreceptor glutamine deamidase CheD.